Here is a 650-residue protein sequence, read N- to C-terminus: Aminopeptidase B (650 aa).

A2 is modified (N-acetylalanine). S7 carries the post-translational modification Phosphoserine. 298–302 contributes to the substrate binding site; that stretch reads GGMEN. H325 provides a ligand contact to Zn(2+). Residue E326 is the Proton acceptor of the active site. Zn(2+) is bound by residues H329 and E348. K446 is modified (N6-acetyllysine).

Belongs to the peptidase M1 family. It depends on Zn(2+) as a cofactor.

It is found in the secreted. It catalyses the reaction Release of N-terminal Arg and Lys from oligopeptides when P1' is not Pro. Also acts on arylamides of Arg and Lys.. Exopeptidase which selectively removes arginine and/or lysine residues from the N-terminus of several peptide substrates including Arg(0)-Leu-enkephalin, Arg(0)-Met-enkephalin and Arg(-1)-Lys(0)-somatostatin-14. Can hydrolyze leukotriene A4 (LTA-4) into leukotriene B4 (LTB-4). This Homo sapiens (Human) protein is Aminopeptidase B (RNPEP).